Consider the following 107-residue polypeptide: Antimicrobial peptide microplusin (107 aa).

A signal peptide spans 1–19; it reads MKSLLVCLVLAVVVLVASG. 3 disulfides stabilise this stretch: Cys25/Cys60, Cys38/Cys88, and Cys49/Cys54. The tract at residues 86 to 107 is disordered; sequence TDCDHSHGHEHSHGHEHGHGHH. A compositionally biased stretch (basic and acidic residues) spans 87-107; sequence DCDHSHGHEHSHGHEHGHGHH.

The protein resides in the secreted. In terms of biological role, has bacteriostatic activity against Gram-positive bacteria, but not against Gram-negative bacteria. Has fungistatic activity against some but not all fungi. Binds and sequesters copper and iron ions. Copper-chelating is crucial for antimicrobial activity against M.luteus. This Ixodes scapularis (Black-legged tick) protein is Antimicrobial peptide microplusin.